We begin with the raw amino-acid sequence, 577 residues long: Aspartate--tRNA(Asp/Asn) ligase (577 aa).

Glutamate 171 serves as a coordination point for L-aspartate. Positions 195–198 (QLFK) are aspartate. Residue arginine 217 participates in L-aspartate binding. ATP is bound by residues 217–219 (RDE) and glutamine 226. L-aspartate is bound at residue histidine 444. Glutamate 474 contributes to the ATP binding site. Arginine 481 contributes to the L-aspartate binding site. Residue 526–529 (GFDR) coordinates ATP.

Belongs to the class-II aminoacyl-tRNA synthetase family. Type 1 subfamily. In terms of assembly, homodimer.

It localises to the cytoplasm. The enzyme catalyses tRNA(Asx) + L-aspartate + ATP = L-aspartyl-tRNA(Asx) + AMP + diphosphate. Its function is as follows. Aspartyl-tRNA synthetase with relaxed tRNA specificity since it is able to aspartylate not only its cognate tRNA(Asp) but also tRNA(Asn). Reaction proceeds in two steps: L-aspartate is first activated by ATP to form Asp-AMP and then transferred to the acceptor end of tRNA(Asp/Asn). This chain is Aspartate--tRNA(Asp/Asn) ligase, found in Helicobacter pylori (strain HPAG1).